Here is a 532-residue protein sequence, read N- to C-terminus: Protein FAM227B (532 aa).

The stretch at 432–482 forms a coiled coil; it reads DNKKDFKRVKQRIKDDIKFLREQQELIDKELDRIQAKASKNLQEVKNEFEN. The disordered stretch occupies residues 494–532; the sequence is KEEYGGSTSASESPQSMQSPQSSSSFPTISEDFNNVEEG. Positions 500–523 are enriched in low complexity; it reads STSASESPQSMQSPQSSSSFPTIS.

The protein belongs to the FAM227 family.

This chain is Protein FAM227B (Fam227b), found in Mus musculus (Mouse).